A 109-amino-acid chain; its full sequence is Antifungal protein ginkbilobin-like protein (109 aa).

In terms of domain architecture, Gnk2-homologous spans 4 to 109; that stretch reads TNFVSSACNT…CFIQYEQHSF (106 aa). 3 disulfides stabilise this stretch: C11/C87, C63/C72, and C75/C100. An alpha-D-mannopyranose-binding site is contributed by N12. R94 and E105 together coordinate alpha-D-mannopyranose.

In terms of biological role, exerts antifungal activity through its carbohydrate-binding specificity. In Picea abies (Norway spruce), this protein is Antifungal protein ginkbilobin-like protein.